Reading from the N-terminus, the 736-residue chain is Phosphoribosylformylglycinamidine synthase subunit PurL (736 aa).

His49 is an active-site residue. 2 residues coordinate ATP: Tyr52 and Lys91. Glu93 is a binding site for Mg(2+). Substrate is bound by residues 94 to 97 (SHNH) and Arg116. His95 acts as the Proton acceptor in catalysis. Asp117 provides a ligand contact to Mg(2+). Position 240 (Gln240) interacts with substrate. Residue Asp268 coordinates Mg(2+). 312–314 (ESQ) provides a ligand contact to substrate. Residues Asp493 and Gly530 each contribute to the ATP site. Asn531 lines the Mg(2+) pocket. Ser533 is a substrate binding site.

This sequence belongs to the FGAMS family. As to quaternary structure, monomer. Part of the FGAM synthase complex composed of 1 PurL, 1 PurQ and 2 PurS subunits.

It is found in the cytoplasm. The enzyme catalyses N(2)-formyl-N(1)-(5-phospho-beta-D-ribosyl)glycinamide + L-glutamine + ATP + H2O = 2-formamido-N(1)-(5-O-phospho-beta-D-ribosyl)acetamidine + L-glutamate + ADP + phosphate + H(+). The protein operates within purine metabolism; IMP biosynthesis via de novo pathway; 5-amino-1-(5-phospho-D-ribosyl)imidazole from N(2)-formyl-N(1)-(5-phospho-D-ribosyl)glycinamide: step 1/2. Its function is as follows. Part of the phosphoribosylformylglycinamidine synthase complex involved in the purines biosynthetic pathway. Catalyzes the ATP-dependent conversion of formylglycinamide ribonucleotide (FGAR) and glutamine to yield formylglycinamidine ribonucleotide (FGAM) and glutamate. The FGAM synthase complex is composed of three subunits. PurQ produces an ammonia molecule by converting glutamine to glutamate. PurL transfers the ammonia molecule to FGAR to form FGAM in an ATP-dependent manner. PurS interacts with PurQ and PurL and is thought to assist in the transfer of the ammonia molecule from PurQ to PurL. The chain is Phosphoribosylformylglycinamidine synthase subunit PurL from Rhodopseudomonas palustris (strain HaA2).